Reading from the N-terminus, the 256-residue chain is ATP synthase peripheral stalk subunit b, mitochondrial (256 aa).

Residues 1 to 42 (MLSRVVLSAAATAAPCLKNAAVLGPGVLQATRVFHTGQPRLA) constitute a mitochondrion transit peptide. An N6-succinyllysine modification is found at Lys131. Lys139, Lys154, Lys162, Lys221, Lys233, and Lys244 each carry N6-acetyllysine.

It belongs to the eukaryotic ATPase B chain family. In terms of assembly, component of the ATP synthase complex composed at least of ATP5F1A/subunit alpha, ATP5F1B/subunit beta, ATP5MC1/subunit c (homooctomer), MT-ATP6/subunit a, MT-ATP8/subunit 8, ATP5ME/subunit e, ATP5MF/subunit f, ATP5MG/subunit g, ATP5MK/subunit k, ATP5MJ/subunit j, ATP5F1C/subunit gamma, ATP5F1D/subunit delta, ATP5F1E/subunit epsilon, ATP5PF/subunit F6, ATP5PB/subunit b, ATP5PD/subunit d, ATP5PO/subunit OSCP. ATP synthase complex consists of a soluble F(1) head domain (subunits alpha(3) and beta(3)) - the catalytic core - and a membrane F(0) domain - the membrane proton channel (subunits c, a, 8, e, f, g, k and j). These two domains are linked by a central stalk (subunits gamma, delta, and epsilon) rotating inside the F1 region and a stationary peripheral stalk (subunits F6, b, d, and OSCP).

The protein localises to the mitochondrion. It localises to the mitochondrion inner membrane. In terms of biological role, subunit b, of the mitochondrial membrane ATP synthase complex (F(1)F(0) ATP synthase or Complex V) that produces ATP from ADP in the presence of a proton gradient across the membrane which is generated by electron transport complexes of the respiratory chain. ATP synthase complex consist of a soluble F(1) head domain - the catalytic core - and a membrane F(1) domain - the membrane proton channel. These two domains are linked by a central stalk rotating inside the F(1) region and a stationary peripheral stalk. During catalysis, ATP synthesis in the catalytic domain of F(1) is coupled via a rotary mechanism of the central stalk subunits to proton translocation. In vivo, can only synthesize ATP although its ATP hydrolase activity can be activated artificially in vitro. Part of the complex F(0) domain. Part of the complex F(0) domain and the peripheric stalk, which acts as a stator to hold the catalytic alpha(3)beta(3) subcomplex and subunit a/ATP6 static relative to the rotary elements. The protein is ATP synthase peripheral stalk subunit b, mitochondrial of Rattus norvegicus (Rat).